A 195-amino-acid chain; its full sequence is Imidazoleglycerol-phosphate dehydratase (195 aa).

This sequence belongs to the imidazoleglycerol-phosphate dehydratase family.

The protein resides in the cytoplasm. It carries out the reaction D-erythro-1-(imidazol-4-yl)glycerol 3-phosphate = 3-(imidazol-4-yl)-2-oxopropyl phosphate + H2O. It participates in amino-acid biosynthesis; L-histidine biosynthesis; L-histidine from 5-phospho-alpha-D-ribose 1-diphosphate: step 6/9. The sequence is that of Imidazoleglycerol-phosphate dehydratase from Paraburkholderia phymatum (strain DSM 17167 / CIP 108236 / LMG 21445 / STM815) (Burkholderia phymatum).